A 371-amino-acid chain; its full sequence is Transmembrane protein 229A (371 aa).

The interval 1-30 is disordered; it reads MAGSDVASEGPSPRDGATRRPGATGGLRSQ. 6 helical membrane-spanning segments follow: residues 51-71, 117-137, 235-255, 269-289, 301-321, and 334-354; these read LPAW…DVLV, AFLF…TLAG, FLFF…FFNV, LWSF…YFHL, VPIY…GLRM, and LNFM…LSVY.

It belongs to the TMEM229 family.

Its subcellular location is the membrane. This Mus musculus (Mouse) protein is Transmembrane protein 229A (Tmem229a).